Here is a 1034-residue protein sequence, read N- to C-terminus: Probable isoleucine--tRNA ligase, mitochondrial (1034 aa).

The transit peptide at 1 to 32 directs the protein to the mitochondrion; it reads MISLNNSFFNKRVIVNSFNNYKRSFGTKSQNE. The 'HIGH' region motif lies at 94–104; the sequence is PYANGDLHMGH. A 'KMSKS' region motif is present at residues 655–659; it reads KMSKS. K658 is a binding site for ATP.

This sequence belongs to the class-I aminoacyl-tRNA synthetase family.

Its subcellular location is the mitochondrion matrix. The enzyme catalyses tRNA(Ile) + L-isoleucine + ATP = L-isoleucyl-tRNA(Ile) + AMP + diphosphate. The chain is Probable isoleucine--tRNA ligase, mitochondrial (mileS) from Dictyostelium discoideum (Social amoeba).